The sequence spans 343 residues: Anthranilate phosphoribosyltransferase (343 aa).

5-phospho-alpha-D-ribose 1-diphosphate-binding positions include G81, 84-85 (GD), 91-94 (NLST), 109-117 (KHGNRSVSS), and S121. G81 serves as a coordination point for anthranilate. Residue S93 coordinates Mg(2+). Position 112 (N112) interacts with anthranilate. Residue R167 participates in anthranilate binding. Residues D226 and E227 each contribute to the Mg(2+) site.

The protein belongs to the anthranilate phosphoribosyltransferase family. In terms of assembly, homodimer. It depends on Mg(2+) as a cofactor.

It catalyses the reaction N-(5-phospho-beta-D-ribosyl)anthranilate + diphosphate = 5-phospho-alpha-D-ribose 1-diphosphate + anthranilate. The protein operates within amino-acid biosynthesis; L-tryptophan biosynthesis; L-tryptophan from chorismate: step 2/5. Its function is as follows. Catalyzes the transfer of the phosphoribosyl group of 5-phosphorylribose-1-pyrophosphate (PRPP) to anthranilate to yield N-(5'-phosphoribosyl)-anthranilate (PRA). The polypeptide is Anthranilate phosphoribosyltransferase (Cellvibrio japonicus (strain Ueda107) (Pseudomonas fluorescens subsp. cellulosa)).